Consider the following 181-residue polypeptide: Peptide deformylase 1 (181 aa).

Positions 106 and 148 each coordinate Fe cation. Glutamate 149 is an active-site residue. Histidine 152 is a Fe cation binding site.

The protein belongs to the polypeptide deformylase family. It depends on Fe(2+) as a cofactor.

The enzyme catalyses N-terminal N-formyl-L-methionyl-[peptide] + H2O = N-terminal L-methionyl-[peptide] + formate. Its function is as follows. Removes the formyl group from the N-terminal Met of newly synthesized proteins. Requires at least a dipeptide for an efficient rate of reaction. N-terminal L-methionine is a prerequisite for activity but the enzyme has broad specificity at other positions. The sequence is that of Peptide deformylase 1 from Burkholderia multivorans (strain ATCC 17616 / 249).